The following is a 39-amino-acid chain: Photosystem II reaction center protein J (39 aa).

The helical transmembrane segment at 7–27 (IPLWLVATIAGLGVIAVLGLF) threads the bilayer.

It belongs to the PsbJ family. In terms of assembly, PSII is composed of 1 copy each of membrane proteins PsbA, PsbB, PsbC, PsbD, PsbE, PsbF, PsbH, PsbI, PsbJ, PsbK, PsbL, PsbM, PsbT, PsbX, PsbY, PsbZ, Psb30/Ycf12, peripheral proteins PsbO, CyanoQ (PsbQ), PsbU, PsbV and a large number of cofactors. It forms dimeric complexes.

It is found in the cellular thylakoid membrane. Functionally, one of the components of the core complex of photosystem II (PSII). PSII is a light-driven water:plastoquinone oxidoreductase that uses light energy to abstract electrons from H(2)O, generating O(2) and a proton gradient subsequently used for ATP formation. It consists of a core antenna complex that captures photons, and an electron transfer chain that converts photonic excitation into a charge separation. The sequence is that of Photosystem II reaction center protein J from Microcystis aeruginosa (strain NIES-843 / IAM M-2473).